We begin with the raw amino-acid sequence, 268 residues long: 4,5-DOPA dioxygenase extradiol (268 aa).

Positions 15, 53, 175, and 229 each coordinate Zn(2+).

The protein belongs to the DODA-type extradiol aromatic ring-opening dioxygenase family. Monomer. Zn(2+) serves as cofactor.

It localises to the cytoplasm. The catalysed reaction is L-dopa + O2 = 4-(L-alanin-3-yl)-2-hydroxy-cis,cis-muconate 6-semialdehyde + H(+). Its pathway is pigment biosynthesis; betalain biosynthesis. Its function is as follows. Opens the cyclic ring of dihydroxy-phenylalanine (DOPA) between carbons 4 and 5, thus producing an unstable seco-DOPA that rearranges nonenzymatically to betalamic acid. Produces mainly (S)-betalamic acid. In Beta vulgaris (Sugar beet), this protein is 4,5-DOPA dioxygenase extradiol (DODA).